Here is an 859-residue protein sequence, read N- to C-terminus: ATP-dependent DNA helicase PIF1 (859 aa).

The transit peptide at 1–45 (MPKWIRSTLNHIIPRRPFICSFNSFLLLKNVSHAKLSFSMSSRGF) directs the protein to the mitochondrion. Residues Ser70 and Ser72 each carry the phosphoserine modification. Polar residues predominate over residues 142 to 157 (NSFDQSSQKKSRSTGF). The interval 142–183 (NSFDQSSQKKSRSTGFKNPLRPALKKESSFDELQNSSISQER) is disordered. Phosphoserine is present on Ser169. Residues 172 to 182 (DELQNSSISQE) are compositionally biased toward polar residues. An ATP-binding site is contributed by 258–265 (GSAGTGKS). Phosphoserine is present on Ser584. A DNA-binding region spans residues 727–746 (QAYVALSRAVSREGLQVLNF). The interval 782 to 859 (KRKLDYAPGP…GQDTEDHILE (78 aa)) is disordered. Residues 800 to 809 (KSNSPAPISA) are compositionally biased toward low complexity. Basic and acidic residues predominate over residues 844–859 (VSDEPRGQDTEDHILE).

Belongs to the helicase family. PIF1 subfamily. Monomer in solution. DNA binding induces dimerization. Associates with mitochondrial and telomeric DNA. Binding to mtDNA is non-specific and the protein seems to coat the entire mtDNA molecule. Binds to the telomerase RNA TLC1. Interacts with the mitochondrial single-strand DNA-binding protein RIM1. Mg(2+) serves as cofactor. Mn(2+) is required as a cofactor. In terms of processing, phosphorylated. Undergoes RAD53-dependent phosphorylation in response to loss of mtDNA.

Its subcellular location is the nucleus. The protein localises to the nucleolus. The protein resides in the mitochondrion inner membrane. The catalysed reaction is Couples ATP hydrolysis with the unwinding of duplex DNA at the replication fork by translocating in the 5'-3' direction. This creates two antiparallel DNA single strands (ssDNA). The leading ssDNA polymer is the template for DNA polymerase III holoenzyme which synthesizes a continuous strand.. It catalyses the reaction ATP + H2O = ADP + phosphate + H(+). In terms of biological role, DNA-dependent ATPase and 5'-3' DNA helicase required for the maintenance of both mitochondrial and nuclear genome stability. Efficiently unwinds G-quadruplex (G4) DNA structures and forked RNA-DNA hybrids. Appears to move along DNA in single nucleotide or base pair steps, powered by hydrolysis of 1 molecule of ATP. Processes at an unwinding rate of about 75 bp/s. Resolves G4 structures, preventing replication pausing and double-strand breaks (DSBs) at G4 motifs. Involved in the maintenance of telomeric DNA. Inhibits telomere elongation, de novo telomere formation and telomere addition to DSBs via catalytic inhibition of telomerase. Reduces the processivity of telomerase by displacing active telomerase from DNA ends. Releases telomerase by unwinding the short telomerase RNA/telomeric DNA hybrid that is the intermediate in the telomerase reaction. Involved in the maintenance of ribosomal (rDNA). Required for efficient fork arrest at the replication fork barrier within rDNA. Involved in the maintenance of mitochondrial (mtDNA). Required to maintain mtDNA under conditions that introduce dsDNA breaks in mtDNA, either preventing or repairing dsDNA breaks. May inhibit replication progression to allow time for repair. May have a general role in chromosomal replication by affecting Okazaki fragment maturation. May have a role in conjunction with DNA2 helicase/nuclease in 5'-flap extension during Okazaki fragment processing. The protein is ATP-dependent DNA helicase PIF1 of Saccharomyces cerevisiae (strain YJM789) (Baker's yeast).